A 407-amino-acid chain; its full sequence is uncharacterized protein (407 aa).

This is an uncharacterized protein from Mycobacterium bovis (strain ATCC BAA-935 / AF2122/97).